The sequence spans 186 residues: MLNILNNVSNSSLYSAASNATAQTGSNLINDLVPETLTASGISIAISVFSVIGTIVIALSVLPQTIKTLREKDTASLSLLLFLLNGIATAFLTLYGIGLVTVHPNSFSFLVDIKNGMFIYNREEWVAGYLICGIFLIMGEALCSVTSFIVLFCKVNNMIKAKKMGMSEEEYYEKQIKPFLKVKGAN.

The next 3 helical transmembrane spans lie at 42–62 (ISIAISVFSVIGTIVIALSVL), 80–100 (LLFLLNGIATAFLTLYGIGLV), and 131–151 (ICGIFLIMGEALCSVTSFIVL).

To U.parvum UU008, UU041 and UU042.

It localises to the cell membrane. This is an uncharacterized protein from Ureaplasma parvum serovar 3 (strain ATCC 700970).